The sequence spans 630 residues: Protein zwilch homolog (630 aa).

It belongs to the ZWILCH family. In terms of assembly, component of the RZZ complex composed of rod-1, czw-1 and zwl-1. Interacts with the spindly-like protein spdl-1. Interacts with NDC80 complex component ndc-80.

Its subcellular location is the cytoplasm. It localises to the cell cortex. It is found in the chromosome. The protein resides in the centromere. The protein localises to the kinetochore. Its subcellular location is the cytoskeleton. It localises to the spindle. Functionally, essential component of the mitotic checkpoint, which prevents cells from prematurely exiting mitosis. Required for chromosome segregation, the assembly of the dynein-dynactin and mdf-1-mdf-2 complexes onto kinetochores and spindle pole separation. Its function related to the spindle assembly machinery and kinetochore-microtubule attachments likely depends on its association in the mitotic RZZ complex. The RZZ complex recruits the spindly-like protein spdl-1 to kinetochores. To prevent irregular chromosome segregation, the complex also inhibits the attachment of the kinetochore-associated NDC80 complex to microtubules. The recruitment of spdl-1 to kinetochores relieves this inhibition. Required for embryonic development. This chain is Protein zwilch homolog (zwl-1), found in Caenorhabditis elegans.